Here is a 71-residue protein sequence, read N- to C-terminus: Large ribosomal subunit protein uL29 (71 aa).

The protein belongs to the universal ribosomal protein uL29 family.

This Rickettsia massiliae (strain Mtu5) protein is Large ribosomal subunit protein uL29.